The following is a 184-amino-acid chain: Photosystem I assembly protein Ycf4 (184 aa).

The next 2 helical transmembrane spans lie at Ile19–Gly39 and Ile57–Ser77.

It belongs to the Ycf4 family.

The protein resides in the plastid. The protein localises to the chloroplast thylakoid membrane. In terms of biological role, seems to be required for the assembly of the photosystem I complex. The chain is Photosystem I assembly protein Ycf4 from Eucalyptus globulus subsp. globulus (Tasmanian blue gum).